Reading from the N-terminus, the 281-residue chain is Nucleotide-binding protein PSHAa2554 (281 aa).

ATP is bound at residue 8-15 (GRSGSGKS). 56–59 (DVRN) is a GTP binding site.

The protein belongs to the RapZ-like family.

Functionally, displays ATPase and GTPase activities. This chain is Nucleotide-binding protein PSHAa2554, found in Pseudoalteromonas translucida (strain TAC 125).